Reading from the N-terminus, the 155-residue chain is MTTAIEYPSAMAKARFVRISATKARRVIDLVRGKSVEEALDILRWAPQSASEPVAKVIASAAANAQNNEGLDPTSLVVATIHADEGPTAKRIRPRAQGRAYRIRKRTSHITVIVESRPPKKAGKQGASASAARARRAQASKAATKKATDSKEGSE.

A disordered region spans residues 109–155 (HITVIVESRPPKKAGKQGASASAARARRAQASKAATKKATDSKEGSE). Basic and acidic residues predominate over residues 146–155 (KATDSKEGSE).

Belongs to the universal ribosomal protein uL22 family. As to quaternary structure, part of the 50S ribosomal subunit.

Its function is as follows. This protein binds specifically to 23S rRNA; its binding is stimulated by other ribosomal proteins, e.g. L4, L17, and L20. It is important during the early stages of 50S assembly. It makes multiple contacts with different domains of the 23S rRNA in the assembled 50S subunit and ribosome. Functionally, the globular domain of the protein is located near the polypeptide exit tunnel on the outside of the subunit, while an extended beta-hairpin is found that lines the wall of the exit tunnel in the center of the 70S ribosome. The sequence is that of Large ribosomal subunit protein uL22 from Mycolicibacterium vanbaalenii (strain DSM 7251 / JCM 13017 / BCRC 16820 / KCTC 9966 / NRRL B-24157 / PYR-1) (Mycobacterium vanbaalenii).